The following is a 499-amino-acid chain: Serine/threonine-protein phosphatase 5 (499 aa).

Residues 1–23 (MAMAEGERTECAEPPRDEPPAEG) are disordered. Alanine 2 carries the post-translational modification N-acetylalanine. 3 TPR repeats span residues 28 to 61 (AEELKTQANDYFKAKDYENAIKFYSQAIELNPSN), 62 to 95 (AIYYGNRSLAYLRTECYGYALGDATRAIELDKKY), and 96 to 129 (IKGYYRRAASNMALGKFRAALRDYETVVKVKPND). The interval 200 to 499 (DQKKLHRKCA…ANTLLQLGMM (300 aa)) is catalytic. Mg(2+)-binding residues include aspartate 242, histidine 244, and aspartate 271. Histidine 244 provides a ligand contact to substrate. Residues arginine 275 and 303–304 (NH) contribute to the substrate site. Asparagine 303 contacts Mg(2+). Catalysis depends on histidine 304, which acts as the Proton donor/acceptor. Residue histidine 352 participates in Mg(2+) binding. Residues arginine 400 and histidine 427 each contribute to the substrate site. A Mg(2+)-binding site is contributed by histidine 427. The interval 495 to 499 (QLGMM) is required for autoinhibition.

This sequence belongs to the PPP phosphatase family. PP-5 (PP-T) subfamily. In terms of assembly, probably forms a complex composed of chaperones HSP90 and HSP70, co-chaperones STIP1/HOP, CDC37, PPP5C, PTGES3/p23, TSC1 and client protein TSC2. Probably forms a complex composed of chaperones HSP90 and HSP70, co-chaperones CDC37, PPP5C, TSC1 and client protein TSC2, CDK4, AKT, RAF1 and NR3C1; this complex does not contain co-chaperones STIP1/HOP and PTGES3/p23. Part of a complex with HSP90/HSP90AA1 and steroid receptors. Interacts (via TPR repeats) with HSP90AA1 (via TPR repeat-binding motif) or HSPA1A/HSPA1B; the interaction is direct and activates the phosphatase activity. Dissociates from HSPA1A/HSPA1B and HSP90AA1 in response to arachidonic acid. Interacts with CPNE1 (via VWFA domain). Interacts with CDC16, CDC27. Interacts with KLHDC10 (via the 6 Kelch repeats); inhibits the phosphatase activity on MAP3K5. Interacts with ATM and ATR; both interactions are induced by DNA damage and enhance ATM and ATR kinase activity. Interacts with RAD17; reduced by DNA damage. Interacts with nuclear receptors such as NR3C1/GCR and PPARG (activated by agonist); regulates their transactivation activities. Interacts (via TPR repeats) with S100 proteins S100A1, S100A2, S100A6, S100B and S100P; the interactions are calcium-dependent, strongly activate PPP5C phosphatase activity and compete with HSP90AA1 and MAP3K5 interactions. Interacts with SMAD2 and SMAD3 but not with SMAD1; decreases SMAD3 phosphorylation and protein levels. Interacts (via TPR repeats) with CRY1 and CRY2; the interaction with CRY2 down-regulates the phosphatase activity on CSNK1E. Interacts (via TPR repeats) with the active form of RAC1, GNA12 or GNA13; these interactions activate the phosphatase activity and translocate PPP5C to the cell membrane. Interacts with FLCN. It depends on Mg(2+) as a cofactor. Mn(2+) serves as cofactor. Post-translationally, activated by at least two different proteolytic cleavages producing a 56 kDa and a 50 kDa form. As to expression, predominantly found in brain and, in lower levels, in testis, but was nearly undetectable in spleen, lung, skeletal muscle, kidney and liver.

The protein localises to the nucleus. It localises to the cytoplasm. It is found in the cell membrane. It catalyses the reaction O-phospho-L-seryl-[protein] + H2O = L-seryl-[protein] + phosphate. The enzyme catalyses O-phospho-L-threonyl-[protein] + H2O = L-threonyl-[protein] + phosphate. Autoinhibited. In the autoinhibited state, the TPR domain interacts with the catalytic region and prevents substrate access to the catalytic pocket. Allosterically activated by various polyunsaturated fatty acids, free long-chain fatty-acids and long-chain fatty acyl-CoA esters, arachidonic acid being the most effective activator. HSP90A and probably RAC1, GNA12 and GNA13 can also release the autoinhibition by the TPR repeat. Activation by RAC1, GNA12 and GNA13 is synergistic with the one produced by fatty acids binding. Inhibited by okadaic acid. Its function is as follows. Serine/threonine-protein phosphatase that dephosphorylates a myriad of proteins involved in different signaling pathways including the kinases CSNK1E, ASK1/MAP3K5, PRKDC and RAF1, the nuclear receptors NR3C1, PPARG, ESR1 and ESR2, SMAD proteins and TAU/MAPT. Implicated in wide ranging cellular processes, including apoptosis, differentiation, DNA damage response, cell survival, regulation of ion channels or circadian rhythms, in response to steroid and thyroid hormones, calcium, fatty acids, TGF-beta as well as oxidative and genotoxic stresses. Participates in the control of DNA damage response mechanisms such as checkpoint activation and DNA damage repair through, for instance, the regulation ATM/ATR-signaling and dephosphorylation of PRKDC and TP53BP1. Inhibits ASK1/MAP3K5-mediated apoptosis induced by oxidative stress. Plays a positive role in adipogenesis, mainly through the dephosphorylation and activation of PPARG transactivation function. Also dephosphorylates and inhibits the anti-adipogenic effect of NR3C1. Regulates the circadian rhythms, through the dephosphorylation and activation of CSNK1E. May modulate TGF-beta signaling pathway by the regulation of SMAD3 phosphorylation and protein expression levels. Dephosphorylates and may play a role in the regulation of TAU/MAPT. Through their dephosphorylation, may play a role in the regulation of ions channels such as KCNH2. Dephosphorylate FNIP1, disrupting interaction with HSP90AA1/Hsp90. This chain is Serine/threonine-protein phosphatase 5 (Ppp5c), found in Rattus norvegicus (Rat).